The following is a 360-amino-acid chain: Pyrimidine monooxygenase RutA (360 aa).

FMN contacts are provided by residues 49 to 50 (IK), asparagine 115, glutamate 124, 140 to 141 (RY), and serine 190.

Belongs to the NtaA/SnaA/DszA monooxygenase family. RutA subfamily.

It catalyses the reaction uracil + FMNH2 + NADH + O2 = (Z)-3-ureidoacrylate + FMN + NAD(+) + H2O + H(+). It carries out the reaction thymine + FMNH2 + NADH + O2 = (Z)-2-methylureidoacrylate + FMN + NAD(+) + H2O + H(+). Catalyzes the pyrimidine ring opening between N-3 and C-4 by an unusual flavin hydroperoxide-catalyzed mechanism, adding oxygen atoms in the process to yield ureidoacrylate peracid, that immediately reacts with FMN forming ureidoacrylate and FMN-N(5)-oxide. The FMN-N(5)-oxide reacts spontaneously with NADH to produce FMN. Requires the flavin reductase RutF to regenerate FMN in vivo. The chain is Pyrimidine monooxygenase RutA from Stutzerimonas stutzeri (strain A1501) (Pseudomonas stutzeri).